Consider the following 279-residue polypeptide: Energy-coupling factor transporter ATP-binding protein EcfA1 (279 aa).

In terms of domain architecture, ABC transporter spans 6 to 240 (VRLEHVFYKY…ADAMRAIGLG (235 aa)). 40–47 (GHNGSGKS) lines the ATP pocket.

This sequence belongs to the ABC transporter superfamily. Energy-coupling factor EcfA family. Forms a stable energy-coupling factor (ECF) transporter complex composed of 2 membrane-embedded substrate-binding proteins (S component), 2 ATP-binding proteins (A component) and 2 transmembrane proteins (T component).

The protein resides in the cell membrane. Its function is as follows. ATP-binding (A) component of a common energy-coupling factor (ECF) ABC-transporter complex. Unlike classic ABC transporters this ECF transporter provides the energy necessary to transport a number of different substrates. The sequence is that of Energy-coupling factor transporter ATP-binding protein EcfA1 from Listeria innocua serovar 6a (strain ATCC BAA-680 / CLIP 11262).